A 566-amino-acid chain; its full sequence is Bicarbonate transporter BicA (566 aa).

Residues 1–15 lie on the Cytoplasmic side of the membrane; that stretch reads MQITNKIHFRNIRGD. A helical transmembrane segment spans residues 16–36; it reads IFGGLTAAVIALPMALAFGVA. Residues 37-42 lie on the Periplasmic side of the membrane; it reads SGAGAE. Residues 43-63 traverse the membrane as a helical segment; the sequence is AGLWGAVLVGFFAALFGGTPT. Residue L64 is a topological domain, cytoplasmic. The chain crosses the membrane as a helical span at residues 65 to 85; the sequence is ISEPTGPMTVVMTAVIAHFTA. T69 is a binding site for hydrogencarbonate. The Periplasmic segment spans residues 86 to 93; it reads SAATPEEG. A helical membrane pass occupies residues 94 to 114; that stretch reads LAIAFTVVMMAGVFQIIFGSL. The Cytoplasmic portion of the chain corresponds to 115 to 126; that stretch reads KLGKYVTMMPYT. The chain crosses the membrane as a helical span at residues 127-147; sequence VISGFMSGIGIILVILQLAPF. Residues 148 to 169 are Periplasmic-facing; that stretch reads LGQASPGGGVIGTLQNLPTLLS. Residues 170–190 traverse the membrane as a helical segment; sequence NIQPGETALALGTVAIIWFMP. At 191–196 the chain is on the cytoplasmic side; it reads EKFKKV. Residues 197–217 traverse the membrane as a helical segment; the sequence is IPPQLVALVLGTVIAFFVFPP. At 218-247 the chain is on the periplasmic side; the sequence is EVSDLRRIGEIRAGFPELVRPSFSPVEFQR. The chain crosses the membrane as a helical span at residues 248–268; sequence MILDAAVLGMLGCIDALLTSV. Na(+) contacts are provided by D262, T266, and G304. The Cytoplasmic segment spans residues 269–318; the sequence is VADSLTRTEHNSNKELIGQGLGNLFSGLFGGIAGAGATMGTVVNIQSGGR. Residue A305 coordinates hydrogencarbonate. T306 serves as a coordination point for Na(+). Residues 319–339 traverse the membrane as a helical segment; the sequence is TALSGLVRAFVLLVVILGAAS. A topological domain (periplasmic) is located at residue L340. A helical membrane pass occupies residues 341–361; sequence TATIPLAVLAGIAFKVGVDII. At 362–371 the chain is on the cytoplasmic side; that stretch reads DWSFLKRAHE. A helical transmembrane segment spans residues 372–392; that stretch reads ISPKGALIMYGVILLTVLVDL. A topological domain (periplasmic) is located at residue I393. Residues 394-414 form a helical membrane-spanning segment; it reads VAVGVGVFVANVLTIERMSNL. The Cytoplasmic segment spans residues 415–566; sequence QSEKVQTVSD…GVTAPSSEMG (152 aa). One can recognise an STAS domain in the interval 436 to 546; it reads KRWLDEGQGR…MSREEALKNA (111 aa).

Belongs to the SLC26A/SulP transporter (TC 2.A.53) family.

The protein localises to the cell inner membrane. In terms of biological role, low/medium affinity, Na(+)-dependent bicarbonate transporter. The protein is Bicarbonate transporter BicA (bicA) of Picosynechococcus sp. (strain ATCC 27264 / PCC 7002 / PR-6) (Agmenellum quadruplicatum).